Consider the following 2217-residue polypeptide: DNA polymerase epsilon catalytic subunit A (2217 aa).

4 residues coordinate Zn(2+): C2104, C2107, C2126, and C2129. A CysA-type zinc finger spans residues 2104–2129 (CEYCSYVSDLDLCRDGLDGKFQCPRC). The [4Fe-4S] cluster site is built by C2160, C2163, C2175, and C2177. A CysB motif motif is present at residues 2160-2177 (CEKCHTVKRDLMSTNCNC).

It belongs to the DNA polymerase type-B family. Heterotetramer. Consists of 4 subunits: POL2, DPB2, DPB3 and DPB4. The cofactor is [4Fe-4S] cluster.

The protein localises to the nucleus. The enzyme catalyses DNA(n) + a 2'-deoxyribonucleoside 5'-triphosphate = DNA(n+1) + diphosphate. DNA polymerase II participates in chromosomal DNA replication. This Candida glabrata (strain ATCC 2001 / BCRC 20586 / JCM 3761 / NBRC 0622 / NRRL Y-65 / CBS 138) (Yeast) protein is DNA polymerase epsilon catalytic subunit A (POL2).